We begin with the raw amino-acid sequence, 194 residues long: Cyclin-dependent kinase inhibitor 4 (194 aa).

Residues 49-58 (LELRSRRLEK) show a composition bias toward basic and acidic residues. 2 disordered regions span residues 49 to 70 (LELRSRRLEKLPPPPPPPPRRR) and 107 to 139 (TRETTPCSLIRDPDTISTPGSTTRRSHSSSHCK).

Belongs to the CDI family. ICK/KRP subfamily.

The polypeptide is Cyclin-dependent kinase inhibitor 4 (KRP4) (Oryza sativa subsp. japonica (Rice)).